A 225-amino-acid chain; its full sequence is Ribosomal RNA large subunit methyltransferase E (225 aa).

Positions 64, 66, 93, 109, and 138 each coordinate S-adenosyl-L-methionine. K178 acts as the Proton acceptor in catalysis.

Belongs to the class I-like SAM-binding methyltransferase superfamily. RNA methyltransferase RlmE family.

The protein resides in the cytoplasm. It carries out the reaction uridine(2552) in 23S rRNA + S-adenosyl-L-methionine = 2'-O-methyluridine(2552) in 23S rRNA + S-adenosyl-L-homocysteine + H(+). Functionally, specifically methylates the uridine in position 2552 of 23S rRNA at the 2'-O position of the ribose in the fully assembled 50S ribosomal subunit. The chain is Ribosomal RNA large subunit methyltransferase E from Cupriavidus pinatubonensis (strain JMP 134 / LMG 1197) (Cupriavidus necator (strain JMP 134)).